The following is a 363-amino-acid chain: NAD(P)H-quinone oxidoreductase subunit 1, chloroplastic (363 aa).

The next 6 membrane-spanning stretches (helical) occupy residues 27–47 (IWLF…VLVI), 98–118 (FSIG…VIPF), 127–147 (LSIG…GLLM), 248–268 (YSGI…LVSS), 300–320 (VFGT…FLFI), and 336–356 (LLNL…LLTT).

This sequence belongs to the complex I subunit 1 family. NDH is composed of at least 16 different subunits, 5 of which are encoded in the nucleus.

Its subcellular location is the plastid. The protein localises to the chloroplast thylakoid membrane. It catalyses the reaction a plastoquinone + NADH + (n+1) H(+)(in) = a plastoquinol + NAD(+) + n H(+)(out). The enzyme catalyses a plastoquinone + NADPH + (n+1) H(+)(in) = a plastoquinol + NADP(+) + n H(+)(out). NDH shuttles electrons from NAD(P)H:plastoquinone, via FMN and iron-sulfur (Fe-S) centers, to quinones in the photosynthetic chain and possibly in a chloroplast respiratory chain. The immediate electron acceptor for the enzyme in this species is believed to be plastoquinone. Couples the redox reaction to proton translocation, and thus conserves the redox energy in a proton gradient. The protein is NAD(P)H-quinone oxidoreductase subunit 1, chloroplastic of Amborella trichopoda.